Consider the following 554-residue polypeptide: Carboxylesterase 1C (554 aa).

Residues 1–18 (MWLHALVWASLAVCPILG) form the signal peptide. An N-linked (GlcNAc...) asparagine glycan is attached at asparagine 79. A disulfide bridge connects residues cysteine 87 and cysteine 116. The active-site Acyl-ester intermediate is serine 221. An intrachain disulfide couples cysteine 273 to cysteine 284. 2 N-linked (GlcNAc...) asparagine glycosylation sites follow: asparagine 274 and asparagine 304. The active-site Charge relay system is glutamate 342. Residue asparagine 377 is glycosylated (N-linked (GlcNAc...) asparagine). The active-site Charge relay system is histidine 455. Phosphoserine is present on serine 473. Residue asparagine 478 is glycosylated (N-linked (GlcNAc...) asparagine). A Prevents secretion from ER motif is present at residues 551–554 (TEHK).

Belongs to the type-B carboxylesterase/lipase family. As to expression, expressed in lung, kidney and liver.

The protein localises to the endoplasmic reticulum lumen. The enzyme catalyses a carboxylic ester + H2O = an alcohol + a carboxylate + H(+). In terms of biological role, involved in the detoxification of xenobiotics and in the activation of ester and amide prodrugs. Involved in the extracellular metabolism of lung surfactant. The sequence is that of Carboxylesterase 1C (Ces1c) from Mus musculus (Mouse).